A 1115-amino-acid polypeptide reads, in one-letter code: MLRTKDLIWTLFFLGTAVSLQVDIVPSQGEISVGESKFFLCQVAGDAKDKDISWFSPNGEKLSPNQQRISVVWNDDDSSTLTIYNANIDDAGIYKCVVTAEDGTQSEATVNVKIFQKLMFKNAPTPQEFKEGEDAVIVCDVVSSLPPTIIWKHKGRDVILKKDVRFIVLSNNYLQIRGIKKTDEGTYRCEGRILARGEINFKDIQVIVNVPPTVQARQSIVNATANLGQSVTLVCDADGFPEPTMSWTKDGEPIENEEEDDEKHIFSDDSSELTIRNVDKNDEAEYVCIAENKAGEQDASIHLKVFAKPKITYVENQTAMELEEQVTLTCEASGDPIPSITWRTSTRNISSEEKTLDGHMVVRSHARVSSLTLKSIQYTDAGEYICTASNTIGQDSQSMYLEFQYAPKLQGPVAVYTWEGNQVNITCEVFAYPSATISWFRDGQLLPSSNYSNIKIYNTPSASYLEVTPDSENDFGNYNCTAVNRIGQESLEFILVQADTPSSPSIDRVEPYSSTAQVQFDEPEATGGVPILKYKAEWKSLGEESWHFKWYDAKEANMEGIVTIMGLKPETRYSVRLAALNGKGLGEISAATEFKTQPVREPSAPKLEGQMGEDGNSIKVNLIKQDDGGSPIRHYLVKYRALASEWKPEIRLPSGSDHVMLKSLDWNAEYEVYVVAENQQGKSKAAHFVFRTSAQPTAIPANGSPTAGLSTGAIVGILIVIFVLLLVVMDITCYFLNKCGLLMCIAVNLCGKAGPGAKGKDMEEGKAAFSKDESKEPIVEVRTEEERTPNHDGGKHTEPNETTPLTEPELPADTTATVEDMLPSVTTVTTNSDTITETFATAQNSPTSETTTLTSSIAPPATTVPDSNSVPAGQATPSKGVTASSSSPASAPKVAPLVDLSDTPTSAPSASNLSSTVLANQGAVLSPSTPASAGETSKAPPASKASPAPTPTPAGAASPLAAVAAPATDAPQAKQEAPSTKGPDPEPTQPGTVKNPPEAATAPASPKSKAATTNPSQGEDLKMDEGNFKTPDIDLAKDVFAALGSPRPATGASGQASELAPSPADSAVPPAPAKTEKGPVETKSEPPESEAKPAPTEVKTVPNDATQTKENESKA.

The first 19 residues, 1–19 (MLRTKDLIWTLFFLGTAVS), serve as a signal peptide directing secretion. Ig-like C2-type domains follow at residues 20–111 (LQVD…ATVN), 116–205 (QKLM…KDIQ), 212–302 (PTVQ…ASIH), 309–402 (PKIT…MYLE), and 407–492 (PKLQ…ESLE). Over 20–711 (LQVDIVPSQG…NGSPTAGLST (692 aa)) the chain is Extracellular. Intrachain disulfides connect Cys-41-Cys-96 and Cys-139-Cys-189. Heparin is bound by residues 152–156 (KHKGR) and 161–165 (KKDVR). N-linked (GlcNAc...) asparagine; partial glycosylation occurs at Asn-222. Cys-235 and Cys-288 are joined by a disulfide. Asn-316, Asn-348, Asn-424, Asn-450, and Asn-479 each carry an N-linked (GlcNAc...) asparagine glycan. Cysteines 330 and 386 form a disulfide. Residues Cys-427 and Cys-480 are joined by a disulfide bond. 2 consecutive Fibronectin type-III domains span residues 500 to 599 (TPSS…TQPV) and 601 to 696 (EPSA…SAQP). Thr-706 carries the GPI-anchor amidated serine lipid modification. Residues 712 to 729 (GAIVGILIVIFVLLLVVM) traverse the membrane as a helical segment. Residues 730-1115 (DITCYFLNKC…TQTKENESKA (386 aa)) lie on the Cytoplasmic side of the membrane. Disordered regions lie at residues 756 to 809 (GAKG…TEPE), 839 to 912 (FATA…SASN), and 924 to 1115 (VLSP…ESKA). Residues 758 to 799 (KGKDMEEGKAAFSKDESKEPIVEVRTEEERTPNHDGGKHTEP) show a composition bias toward basic and acidic residues. 2 positions are modified to phosphoserine: Ser-770 and Ser-774. Low complexity-rich tracts occupy residues 800-809 (NETTPLTEPE), 845-856 (SPTSETTTLTSS), and 876-896 (TPSK…KVAP). Ser-887 and Ser-890 each carry phosphoserine. Polar residues-rich tracts occupy residues 902–912 (DTPTSAPSASN) and 926–935 (SPSTPASAGE). Ser-926 bears the Phosphoserine mark. Position 929 is a phosphothreonine (Thr-929). 2 stretches are compositionally biased toward low complexity: residues 936 to 974 (TSKA…PQAK) and 999 to 1012 (AATA…KAAT). A phosphoserine mark is found at Ser-946 and Ser-958. Thr-1001 is modified (phosphothreonine). At Ser-1005 the chain carries Phosphoserine. 2 stretches are compositionally biased toward basic and acidic residues: residues 1019–1037 (EDLK…DLAK) and 1074–1091 (KTEK…ESEA). Thr-1030 carries the post-translational modification Phosphothreonine.

Interacts with MDK. Found in a complex with SLC39A6, SLC39A10 and with NCAM1; this complex controls NCAM1 phosphorylation and integration into focal adhesion complexes during epithelial-tomesenchymal transition. Interacts with synaptic plasticity regulator PANTS. In terms of processing, polysialylated by ST8SIA2 and ST8SIA4. Polysialylation modulates cell interactions by confering both attractive and repulsive properties that are highly regulated by ST8SIA2 and ST8SIA4. Polysialylation is formed on a-2,3-linked sialic acid of core glycans.

The protein localises to the cell membrane. In terms of biological role, this protein is a cell adhesion molecule involved in neuron-neuron adhesion, neurite fasciculation, outgrowth of neurites, etc. The polypeptide is Neural cell adhesion molecule 1 (Mus musculus (Mouse)).